Consider the following 149-residue polypeptide: Potassium binding protein Kbp (149 aa).

Residues 23 to 91 (DKDDQAKKVQ…SVDDQVKTAT (69 aa)) enclose the BON domain. The 50-residue stretch at 97–146 (QFYTVKSGDTLSAISKQVYGNANLYNKIFEANKPMLKSPDKIYPGQVLRI) folds into the LysM domain.

Its subcellular location is the cytoplasm. In terms of biological role, highly specific potassium binding protein that is required for normal growth in the presence of high levels of external K(+). May act as a sensor of cytoplasmic K(+) concentration. This Escherichia coli O6:H1 (strain CFT073 / ATCC 700928 / UPEC) protein is Potassium binding protein Kbp.